The chain runs to 426 residues: UDP-N-acetylmuramoylalanine--D-glutamate ligase (426 aa).

An ATP-binding site is contributed by 112–118 (GSVGKST).

The protein belongs to the MurCDEF family.

The protein localises to the cytoplasm. The enzyme catalyses UDP-N-acetyl-alpha-D-muramoyl-L-alanine + D-glutamate + ATP = UDP-N-acetyl-alpha-D-muramoyl-L-alanyl-D-glutamate + ADP + phosphate + H(+). Its pathway is cell wall biogenesis; peptidoglycan biosynthesis. In terms of biological role, cell wall formation. Catalyzes the addition of glutamate to the nucleotide precursor UDP-N-acetylmuramoyl-L-alanine (UMA). This Thermosipho melanesiensis (strain DSM 12029 / CIP 104789 / BI429) protein is UDP-N-acetylmuramoylalanine--D-glutamate ligase.